The following is a 297-amino-acid chain: Transcriptional regulator protein Pur-beta (297 aa).

2 disordered regions span residues 1-26 (MADG…EQET) and 275-297 (QERH…VDDD). The residue at position 2 (A2) is an N-acetylalanine. Positions 23 to 246 (EQETQELASK…LRVSEVKPSY (224 aa)) are DNA-binding. Residues 275–288 (QERHRDKMYERREE) show a composition bias toward basic and acidic residues.

It belongs to the PUR DNA-binding protein family.

It is found in the nucleus. Transcriptional regulator which can act as an activator or a repressor. This Danio rerio (Zebrafish) protein is Transcriptional regulator protein Pur-beta (purb).